A 66-amino-acid chain; its full sequence is MAKGKDVRVTIILECTSCVRNDIKKESAGISRYITQKNRHNTPSRLELRKFCAYCYKHTIHGEIKK.

The protein belongs to the bacterial ribosomal protein bL33 family.

Its subcellular location is the plastid. The protein localises to the chloroplast. The protein is Large ribosomal subunit protein bL33c of Lepidium virginicum (Virginia pepperweed).